Here is a 147-residue protein sequence, read N- to C-terminus: Large ribosomal subunit protein uL15 (147 aa).

The segment at 1 to 57 (MKLHELKSAPKSRNHKAKVVGRGHGSGLGKTSGRGQKGQKARKSGRTRPGFEGGQTP) is disordered. Positions 10 to 21 (PKSRNHKAKVVG) are enriched in basic residues. The span at 22-36 (RGHGSGLGKTSGRGQ) shows a compositional bias: gly residues. Basic residues predominate over residues 37–46 (KGQKARKSGR).

It belongs to the universal ribosomal protein uL15 family. As to quaternary structure, part of the 50S ribosomal subunit.

Its function is as follows. Binds to the 23S rRNA. This chain is Large ribosomal subunit protein uL15, found in Mycoplasmoides gallisepticum (strain R(low / passage 15 / clone 2)) (Mycoplasma gallisepticum).